Consider the following 197-residue polypeptide: Nucleoside triphosphate pyrophosphatase (197 aa).

D70 serves as the catalytic Proton acceptor.

It belongs to the Maf family. A divalent metal cation serves as cofactor.

The protein localises to the cytoplasm. The enzyme catalyses a ribonucleoside 5'-triphosphate + H2O = a ribonucleoside 5'-phosphate + diphosphate + H(+). The catalysed reaction is a 2'-deoxyribonucleoside 5'-triphosphate + H2O = a 2'-deoxyribonucleoside 5'-phosphate + diphosphate + H(+). Functionally, nucleoside triphosphate pyrophosphatase. May have a dual role in cell division arrest and in preventing the incorporation of modified nucleotides into cellular nucleic acids. The chain is Nucleoside triphosphate pyrophosphatase (yhdE) from Shigella flexneri.